The following is a 1361-amino-acid chain: Cell migration-inducing and hyaluronan-binding protein (1361 aa).

Residues Met1–Ser30 form the signal peptide. One can recognise a G8 domain in the interval Gln44–Lys166. Residues Asn119, Asn165, Asn312, and Asn420 are each glycosylated (N-linked (GlcNAc...) asparagine). A GG-type lectin 1 domain is found at Gly176–Ser317. Residues Ala295 to Thr591 are necessary for its endoplasmic reticulum (ER) retention and interaction with HSPA5. 4 PbH1 repeats span residues Asp572–Gly594, Ser595–Asp617, Ile719–Asn741, and Gly798–Ser819. Asn889 and Asn921 each carry an N-linked (GlcNAc...) asparagine glycan. The region spanning Asn1227–Leu1361 is the GG-type lectin 2 domain.

This sequence belongs to the CEMIP family. As to quaternary structure, interacts with EPHA2 and ITPR3. Interacts with HSPA5/BIP; the interaction induces calcium leakage from the endoplasmic reticulum and cell migration. Interacts with clathrin heavy chain/CLTC. Post-translationally, N-glycosylated; glycosylation is not necessary for HA-binding. In terms of tissue distribution, expressed in Deiters' cells and various supporting cells in the organ of Corti including inner phalangeal, border, inner and outer pillar cells (at protein level). Weakly expressed in brain and testis. In ear, it is specifically expressed in inner ear. Expressed in Deiters' cells in the organ of Corti at P0 (postnatal day zero) before the onset of hearing, but disappears by day P7. Also expressed in fibrocytes of the spiral ligament and the spiral limbus through to P21, when the cochlea matures.

It localises to the nucleus. The protein localises to the cytoplasm. Its subcellular location is the endoplasmic reticulum. It is found in the cell membrane. The protein resides in the membrane. It localises to the clathrin-coated pit. The protein localises to the secreted. The enzyme catalyses Random hydrolysis of (1-&gt;4)-linkages between N-acetyl-beta-D-glucosamine and D-glucuronate residues in hyaluronate.. Its activity is regulated as follows. Activity is up-regulated by histamine. Functionally, mediates depolymerization of hyaluronic acid (HA) via the cell membrane-associated clathrin-coated pit endocytic pathway. Binds to hyaluronic acid. Hydrolyzes high molecular weight hyaluronic acid to produce an intermediate-sized product, a process that may occur through rapid vesicle endocytosis and recycling without intracytoplasmic accumulation or digestion in lysosomes. Involved in hyaluronan catabolism in the dermis of the skin and arthritic synovium. Positively regulates epithelial-mesenchymal transition (EMT), and hence tumor cell growth, invasion and cancer dissemination. In collaboration with HSPA5/BIP, promotes cancer cell migration in a calcium and PKC-dependent manner. May be involved in hearing. The sequence is that of Cell migration-inducing and hyaluronan-binding protein (Cemip) from Mus musculus (Mouse).